A 207-amino-acid chain; its full sequence is Thiamine-phosphate synthase (207 aa).

Residues 36-40 (QLRIK) and D68 each bind 4-amino-2-methyl-5-(diphosphooxymethyl)pyrimidine. Mg(2+)-binding residues include D69 and D88. S106 serves as a coordination point for 4-amino-2-methyl-5-(diphosphooxymethyl)pyrimidine. A 2-[(2R,5Z)-2-carboxy-4-methylthiazol-5(2H)-ylidene]ethyl phosphate-binding site is contributed by 132-134 (TQT). A 4-amino-2-methyl-5-(diphosphooxymethyl)pyrimidine-binding site is contributed by K135. Residues G162 and 182-183 (VS) contribute to the 2-[(2R,5Z)-2-carboxy-4-methylthiazol-5(2H)-ylidene]ethyl phosphate site.

Belongs to the thiamine-phosphate synthase family. The cofactor is Mg(2+).

The enzyme catalyses 2-[(2R,5Z)-2-carboxy-4-methylthiazol-5(2H)-ylidene]ethyl phosphate + 4-amino-2-methyl-5-(diphosphooxymethyl)pyrimidine + 2 H(+) = thiamine phosphate + CO2 + diphosphate. The catalysed reaction is 2-(2-carboxy-4-methylthiazol-5-yl)ethyl phosphate + 4-amino-2-methyl-5-(diphosphooxymethyl)pyrimidine + 2 H(+) = thiamine phosphate + CO2 + diphosphate. It carries out the reaction 4-methyl-5-(2-phosphooxyethyl)-thiazole + 4-amino-2-methyl-5-(diphosphooxymethyl)pyrimidine + H(+) = thiamine phosphate + diphosphate. Its pathway is cofactor biosynthesis; thiamine diphosphate biosynthesis; thiamine phosphate from 4-amino-2-methyl-5-diphosphomethylpyrimidine and 4-methyl-5-(2-phosphoethyl)-thiazole: step 1/1. Condenses 4-methyl-5-(beta-hydroxyethyl)thiazole monophosphate (THZ-P) and 2-methyl-4-amino-5-hydroxymethyl pyrimidine pyrophosphate (HMP-PP) to form thiamine monophosphate (TMP). This Pyrococcus horikoshii (strain ATCC 700860 / DSM 12428 / JCM 9974 / NBRC 100139 / OT-3) protein is Thiamine-phosphate synthase.